The sequence spans 179 residues: Orotate phosphoribosyltransferase (179 aa).

Residues R94, K95, K98, H100, and E120–S128 each bind 5-phospho-alpha-D-ribose 1-diphosphate. Orotate contacts are provided by T124 and R152.

This sequence belongs to the purine/pyrimidine phosphoribosyltransferase family. PyrE subfamily. In terms of assembly, homodimer. The cofactor is Mg(2+).

It catalyses the reaction orotidine 5'-phosphate + diphosphate = orotate + 5-phospho-alpha-D-ribose 1-diphosphate. It participates in pyrimidine metabolism; UMP biosynthesis via de novo pathway; UMP from orotate: step 1/2. Functionally, catalyzes the transfer of a ribosyl phosphate group from 5-phosphoribose 1-diphosphate to orotate, leading to the formation of orotidine monophosphate (OMP). This Mycobacterium leprae (strain TN) protein is Orotate phosphoribosyltransferase.